A 209-amino-acid polypeptide reads, in one-letter code: Ribulose-phosphate 3-epimerase (209 aa).

Ser-8 is a binding site for substrate. Positions 33, 35, 64, and 170 each coordinate a divalent metal cation. Asp-35 serves as the catalytic Proton acceptor. Substrate-binding positions include His-64, 170–172 (DGG), and 191–192 (GS). Asp-170 serves as the catalytic Proton donor.

It belongs to the ribulose-phosphate 3-epimerase family. It depends on a divalent metal cation as a cofactor.

The catalysed reaction is D-ribulose 5-phosphate = D-xylulose 5-phosphate. Its pathway is carbohydrate degradation. Its function is as follows. Catalyzes the reversible epimerization of D-ribulose 5-phosphate to D-xylulose 5-phosphate. This is Ribulose-phosphate 3-epimerase from Mycoplasma genitalium (strain ATCC 33530 / DSM 19775 / NCTC 10195 / G37) (Mycoplasmoides genitalium).